The sequence spans 292 residues: tRNA (guanine-N(7)-)-methyltransferase (292 aa).

The disordered stretch occupies residues 1–54 (MLKRDQSEMDIEAETANMGKEEKESFVHKRQKYRQEQEEKRLAAKKGVSFEQPE). Residues 19–42 (GKEEKESFVHKRQKYRQEQEEKRL) are compositionally biased toward basic and acidic residues. Residues G110, 133–134 (EI), 168–169 (NA), and C188 contribute to the S-adenosyl-L-methionine site. The active site involves D191. 266–268 (TEE) contacts S-adenosyl-L-methionine.

This sequence belongs to the class I-like SAM-binding methyltransferase superfamily. TrmB family. In terms of assembly, forms a complex with TRM82.

The protein resides in the nucleus. The catalysed reaction is guanosine(46) in tRNA + S-adenosyl-L-methionine = N(7)-methylguanosine(46) in tRNA + S-adenosyl-L-homocysteine. The protein operates within tRNA modification; N(7)-methylguanine-tRNA biosynthesis. In terms of biological role, catalyzes the formation of N(7)-methylguanine at position 46 (m7G46) in tRNA. The protein is tRNA (guanine-N(7)-)-methyltransferase of Yarrowia lipolytica (strain CLIB 122 / E 150) (Yeast).